The chain runs to 1310 residues: Zinc finger protein 521 (1310 aa).

Over residues Met-1–Arg-10 the composition is skewed to basic residues. The tract at residues Met-1 to Ala-46 is disordered. The span at Ser-11–Asp-21 shows a compositional bias: basic and acidic residues. The C2H2-type 1; degenerate zinc finger occupies His-48–Ile-68. A disordered region spans residues Asp-82–Phe-106. Polar residues predominate over residues Trp-87–Gln-97. 7 consecutive C2H2-type zinc fingers follow at residues Tyr-119–His-141, Phe-147–His-169, Tyr-175–His-197, Tyr-203–His-225, Gln-247–His-270, Leu-282–His-305, and Asn-311–His-333. The C2H2-type 9; degenerate zinc finger occupies Tyr-404–His-428. 3 consecutive C2H2-type zinc fingers follow at residues His-436–His-459, Tyr-476–His-499, and Phe-512–His-535. The C2H2-type 13; atypical zinc-finger motif lies at Tyr-559–His-584. 7 C2H2-type zinc fingers span residues Tyr-633 to His-655, Leu-663 to His-685, Tyr-693 to His-716, Phe-721 to His-744, Tyr-751 to His-774, His-782 to His-804, and Tyr-808 to His-831. The segment at Tyr-885–Asp-907 adopts a C2H2-type 21; degenerate zinc-finger fold. 3 C2H2-type zinc fingers span residues Tyr-929–His-951, Tyr-958–His-980, and Phe-1019–His-1041. Residues Tyr-1064–Leu-1082 form a C2H2-type 25; degenerate zinc finger. 5 consecutive C2H2-type zinc fingers follow at residues Thr-1138–His-1161, Tyr-1194–His-1216, His-1224–His-1246, Phe-1255–His-1278, and Tyr-1285–His-1308.

Belongs to the krueppel C2H2-type zinc-finger protein family.

It localises to the nucleus. Its function is as follows. Transcription factor that can both act as an activator or a repressor depending on the context. Involved in BMP signaling and in the regulation of the immature compartment of the hematopoietic system. In Xenopus laevis (African clawed frog), this protein is Zinc finger protein 521 (znf521).